The chain runs to 106 residues: Thioredoxin (106 aa).

Lys3 is subject to N6-acetyllysine. One can recognise a Thioredoxin domain in the interval 3–106; sequence KQIESKTAFQ…KLEATINELV (104 aa). Lys8 carries the post-translational modification N6-succinyllysine. Residues Cys32 and Cys35 each act as nucleophile in the active site. An intrachain disulfide couples Cys32 to Cys35. At Lys39 the chain carries N6-acetyllysine. An S-nitrosocysteine mark is found at Cys62 and Cys69. Cys73 bears the S-nitrosocysteine; alternate mark. Lys95 carries the N6-acetyllysine; alternate modification. Lys95 bears the N6-succinyllysine; alternate mark.

It belongs to the thioredoxin family. In terms of assembly, homodimer; disulfide-linked. Interacts with TXNIP through the redox-active site. Interacts with MAP3K5 and CASP3. Interacts with APEX1; the interaction stimulates the FOS/JUN AP-1 DNA-binding activity in a redox-dependent manner. Post-translationally, in the fully reduced protein, both Cys-69 and Cys-73 are nitrosylated in response to nitric oxide (NO). When two disulfide bonds are present in the protein, only Cys-73 is nitrosylated. Cys-73 can serve as donor for nitrosylation of target proteins.

It localises to the nucleus. The protein resides in the cytoplasm. Its subcellular location is the secreted. Its function is as follows. Participates in various redox reactions through the reversible oxidation of its active center dithiol to a disulfide and catalyzes dithiol-disulfide exchange reactions. Plays a role in the reversible S-nitrosylation of cysteine residues in target proteins, and thereby contributes to the response to intracellular nitric oxide. Nitrosylates the active site Cys of CASP3 in response to nitric oxide (NO), and thereby inhibits caspase-3 activity. Induces the FOS/JUN AP-1 DNA binding activity in ionizing radiation (IR) cells through its oxidation/reduction status and stimulates AP-1 transcriptional activity. This Pongo abelii (Sumatran orangutan) protein is Thioredoxin (TXN).